The primary structure comprises 172 residues: AIG2-like protein C (172 aa).

Substrate is bound at residue 13 to 18 (YGSLQE). E81 functions as the Proton acceptor in the catalytic mechanism.

It belongs to the gamma-glutamylcyclotransferase family. Expressed in flowers, leaves, stems and roots.

Putative gamma-glutamylcyclotransferase. The sequence is that of AIG2-like protein C from Arabidopsis thaliana (Mouse-ear cress).